The following is a 421-amino-acid chain: WD repeat and SOCS box-containing protein 1 (421 aa).

WD repeat units follow at residues 32–71 (KCGRENWTVAFAPDGSYFAWSQGHRTVKLVPWSQCLQNFL), 124–165 (SRCV…LLLN), 168–208 (DHTE…NMMK), 212–251 (GHQNWVYSCAFSPDSSMLCSVGASKAVFLWNMDKYTMIRK), 254–293 (GHHHDVVACDFSPDGALLATASYDTRVYIWDPHNGDILME), and 309–346 (ANDRWVRSVSFSHDGLHVASLADDKMVRFWRIDEDYPV). In terms of domain architecture, SOCS box spans 372-421 (DGSVYFWATPRQVPSLQHLCRMSIRRVMPTQEVQELPIPSKLLEFLSYRI).

In terms of assembly, interacts with DIO2. Component of the probable ECS(WSB1) E3 ubiquitin ligase complex which contains CUL5, RNF7/RBX2, Elongin BC complex and WSB1. Component of a probable ECS-like E3 ubiquitin-protein ligase complex which contains CUL5, RBX1, Elongin BC complex and WSB1. Interacts with CUL5, RNF7, ELOB and ELOC. Binds to HIPK2 through WD40 repeats.

The protein operates within protein modification; protein ubiquitination. Its function is as follows. Probable substrate-recognition component of a SCF-like ECS (Elongin-Cullin-SOCS-box protein) E3 ubiquitin ligase complex which mediates the ubiquitination and subsequent proteasomal degradation of target proteins. Recognizes type II iodothyronine deiodinase/DIO2. Confers constitutive instability to HIPK2 through proteasomal degradation. This is WD repeat and SOCS box-containing protein 1 (WSB1) from Homo sapiens (Human).